A 120-amino-acid chain; its full sequence is Large ribosomal subunit protein uL18 (120 aa).

Belongs to the universal ribosomal protein uL18 family. Part of the 50S ribosomal subunit; part of the 5S rRNA/L5/L18/L25 subcomplex. Contacts the 5S and 23S rRNAs.

Functionally, this is one of the proteins that bind and probably mediate the attachment of the 5S RNA into the large ribosomal subunit, where it forms part of the central protuberance. The polypeptide is Large ribosomal subunit protein uL18 (Macrococcus caseolyticus (strain JCSC5402) (Macrococcoides caseolyticum)).